Consider the following 544-residue polypeptide: Chaperonin GroEL (544 aa).

Residues T29–P32, K50, D86–T90, G414, D479–A481, and D495 contribute to the ATP site.

Belongs to the chaperonin (HSP60) family. Forms a cylinder of 14 subunits composed of two heptameric rings stacked back-to-back. Interacts with the co-chaperonin GroES.

The protein resides in the cytoplasm. It carries out the reaction ATP + H2O + a folded polypeptide = ADP + phosphate + an unfolded polypeptide.. Its function is as follows. Together with its co-chaperonin GroES, plays an essential role in assisting protein folding. The GroEL-GroES system forms a nano-cage that allows encapsulation of the non-native substrate proteins and provides a physical environment optimized to promote and accelerate protein folding. The protein is Chaperonin GroEL of Treponema denticola (strain ATCC 35405 / DSM 14222 / CIP 103919 / JCM 8153 / KCTC 15104).